The following is a 146-amino-acid chain: uncharacterized protein (146 aa).

The helical transmembrane segment at 7–27 threads the bilayer; sequence FVLSITIVLVILIIIAYIWYN.

Belongs to the asfivirus E146L family.

Its subcellular location is the host membrane. The protein resides in the virion. This is an uncharacterized protein from Ornithodoros (relapsing fever ticks).